The chain runs to 420 residues: Acetylornithine aminotransferase (420 aa).

Residues 118-119 (GA) and phenylalanine 151 contribute to the pyridoxal 5'-phosphate site. Arginine 154 contacts N(2)-acetyl-L-ornithine. Position 242 to 245 (242 to 245 (DEVQ)) interacts with pyridoxal 5'-phosphate. Lysine 271 is subject to N6-(pyridoxal phosphate)lysine. Serine 298 is a N(2)-acetyl-L-ornithine binding site. Residue threonine 299 participates in pyridoxal 5'-phosphate binding.

This sequence belongs to the class-III pyridoxal-phosphate-dependent aminotransferase family. ArgD subfamily. As to quaternary structure, homodimer. Requires pyridoxal 5'-phosphate as cofactor.

It localises to the cytoplasm. It catalyses the reaction N(2)-acetyl-L-ornithine + 2-oxoglutarate = N-acetyl-L-glutamate 5-semialdehyde + L-glutamate. Its pathway is amino-acid biosynthesis; L-arginine biosynthesis; N(2)-acetyl-L-ornithine from L-glutamate: step 4/4. The sequence is that of Acetylornithine aminotransferase from Parasynechococcus marenigrum (strain WH8102).